The primary structure comprises 295 residues: Protoheme IX farnesyltransferase (295 aa).

A run of 9 helical transmembrane segments spans residues 27–47 (IMYL…GNIH), 48–68 (PFIG…AGAI), 93–115 (IARS…VMMI), 119–136 (YLSG…SLVY), 147–167 (NIVI…TSVT), 175–195 (LILF…LSLL), 219–239 (IYIL…GIFL), 247–267 (TCAI…FVSI), and 275–295 (MFTY…ISSF).

Belongs to the UbiA prenyltransferase family. Protoheme IX farnesyltransferase subfamily.

It localises to the cell inner membrane. The enzyme catalyses heme b + (2E,6E)-farnesyl diphosphate + H2O = Fe(II)-heme o + diphosphate. It functions in the pathway porphyrin-containing compound metabolism; heme O biosynthesis; heme O from protoheme: step 1/1. Converts heme B (protoheme IX) to heme O by substitution of the vinyl group on carbon 2 of heme B porphyrin ring with a hydroxyethyl farnesyl side group. This chain is Protoheme IX farnesyltransferase, found in Ehrlichia chaffeensis (strain ATCC CRL-10679 / Arkansas).